A 316-amino-acid polypeptide reads, in one-letter code: Ribosomal protein L11 methyltransferase (316 aa).

Residues Thr163, Gly184, Asp206, and Asn249 each coordinate S-adenosyl-L-methionine.

Belongs to the methyltransferase superfamily. PrmA family.

The protein localises to the cytoplasm. It carries out the reaction L-lysyl-[protein] + 3 S-adenosyl-L-methionine = N(6),N(6),N(6)-trimethyl-L-lysyl-[protein] + 3 S-adenosyl-L-homocysteine + 3 H(+). Its function is as follows. Methylates ribosomal protein L11. This Pediococcus pentosaceus (strain ATCC 25745 / CCUG 21536 / LMG 10740 / 183-1w) protein is Ribosomal protein L11 methyltransferase.